Reading from the N-terminus, the 291-residue chain is Early E4 34 kDa protein (291 aa).

It belongs to the adenoviridae E4 30 to 34 kDa protein family. Interacts with E1B-55k.

Its subcellular location is the host nucleus. It localises to the host cytoplasm. Its function is as follows. Plays a major role to prevent cellular inhibition of viral genome replication by nuclear bodies. Assembles an SCF-like E3 ubiquitin ligase complex based on the cellular proteins ELOB, ELOC, CUL5 and RBX1, in cooperation with viral E1B-55K. This viral RING-type ligase ubiquitinates cellular substrates prior to proteasomal degradation: p53/TP53, LIG4, MRE11-RAD50-NBS1 (MRN) complex, ITGA3, DAXX and BLM. This Homo sapiens (Human) protein is Early E4 34 kDa protein.